The sequence spans 213 residues: MGKVLTMAMPKGRIFEEAAGLLRQAGYRLPEEFEESRKLIIDVPEENLRFILAKPMDVTTYVEHGVADAGIAGKDVMLEEERDVYEVLDLKISKCHLAVAGLPGADWNGVAPRIATKYPNVASSYFREQGEQVEIIKLNGSIELAPLIGLADRIVDIVSTGRTLKENGLVESEHICDITSRFIVNPVSYRMKDDVIDEMAARLARVVEGETAQ.

It belongs to the ATP phosphoribosyltransferase family. Short subfamily. Heteromultimer composed of HisG and HisZ subunits.

The protein resides in the cytoplasm. It catalyses the reaction 1-(5-phospho-beta-D-ribosyl)-ATP + diphosphate = 5-phospho-alpha-D-ribose 1-diphosphate + ATP. Its pathway is amino-acid biosynthesis; L-histidine biosynthesis; L-histidine from 5-phospho-alpha-D-ribose 1-diphosphate: step 1/9. Its function is as follows. Catalyzes the condensation of ATP and 5-phosphoribose 1-diphosphate to form N'-(5'-phosphoribosyl)-ATP (PR-ATP). Has a crucial role in the pathway because the rate of histidine biosynthesis seems to be controlled primarily by regulation of HisG enzymatic activity. The chain is ATP phosphoribosyltransferase from Bacillus velezensis (strain DSM 23117 / BGSC 10A6 / LMG 26770 / FZB42) (Bacillus amyloliquefaciens subsp. plantarum).